Here is a 340-residue protein sequence, read N- to C-terminus: Ferrochelatase (340 aa).

Positions 189 and 292 each coordinate Fe cation.

Belongs to the ferrochelatase family.

It is found in the cytoplasm. The catalysed reaction is heme b + 2 H(+) = protoporphyrin IX + Fe(2+). Its pathway is porphyrin-containing compound metabolism; protoheme biosynthesis; protoheme from protoporphyrin-IX: step 1/1. Its function is as follows. Catalyzes the ferrous insertion into protoporphyrin IX. The polypeptide is Ferrochelatase (Pseudomonas aeruginosa (strain LESB58)).